The chain runs to 294 residues: Formate dehydrogenase, nitrate-inducible, iron-sulfur subunit (294 aa).

The Periplasmic segment spans residues 1–256 (MAMETQDIIK…DTSVSLWKGA (256 aa)). 4Fe-4S ferredoxin-type domains lie at 30 to 58 (VAKL…IRDE), 91 to 123 (LEWL…QYAN), 124 to 153 (GIVD…LNKE), and 158 to 189 (YKCT…FGTK). [4Fe-4S] cluster is bound by residues C39, C42, C45, C49, C100, C103, C108, C112, C133, C136, C139, C143, C160, C163, C175, and C179. The helical transmembrane segment at 257-279 (LKPLAAAGFIATFAGLIFHYIGI) threads the bilayer. Topologically, residues 280-294 (GPNKEVDDDEEDHHE) are cytoplasmic.

Trimer of heterotrimers, consisting of subunits alpha, beta and gamma. The cofactor is [4Fe-4S] cluster.

The protein localises to the cell inner membrane. In terms of biological role, formate dehydrogenase allows E.coli to use formate as major electron donor during anaerobic respiration, when nitrate is used as electron acceptor. The beta subunit FdnH is an electron transfer unit containing 4 iron-sulfur clusters; it serves as a conduit for electrons that are transferred from the formate oxidation site in the alpha subunit (FdnG) to the menaquinone associated with the gamma subunit (FdnI) of formate dehydrogenase-N. Formate dehydrogenase-N is part of a system that generates proton motive force, together with the dissimilatory nitrate reductase (Nar). The polypeptide is Formate dehydrogenase, nitrate-inducible, iron-sulfur subunit (fdnH) (Escherichia coli (strain K12)).